The chain runs to 289 residues: ATP synthase subunit a (289 aa).

Helical transmembrane passes span 41–61 (KATA…WLGF), 101–121 (YLLV…IPAA), 129–149 (IAVP…AGIK), 166–186 (TAPL…TLIV), 189–209 (FTLA…LLVF), 222–242 (FVFG…ELVI), and 244–264 (ALQA…AMAH).

It belongs to the ATPase A chain family. As to quaternary structure, F-type ATPases have 2 components, CF(1) - the catalytic core - and CF(0) - the membrane proton channel. CF(1) has five subunits: alpha(3), beta(3), gamma(1), delta(1), epsilon(1). CF(0) has three main subunits: a(1), b(2) and c(9-12). The alpha and beta chains form an alternating ring which encloses part of the gamma chain. CF(1) is attached to CF(0) by a central stalk formed by the gamma and epsilon chains, while a peripheral stalk is formed by the delta and b chains.

The protein localises to the cell membrane. Functionally, key component of the proton channel; it plays a direct role in the translocation of protons across the membrane. The protein is ATP synthase subunit a of Frankia alni (strain DSM 45986 / CECT 9034 / ACN14a).